The chain runs to 25 residues: Caerin-1.4 (25 aa).

At Leu25 the chain carries Leucine amide.

The protein belongs to the frog skin active peptide (FSAP) family. Caerin subfamily. Expressed by the skin parotoid and/or rostral glands.

It localises to the secreted. Antibacterial peptide, that adopts an alpha helical conformation which can disrupt bacterial membranes. Each caerin displays a different antimicrobial specificity. This is Caerin-1.4 from Ranoidea caerulea (Green tree frog).